The following is a 212-amino-acid chain: Leucyl/phenylalanyl-tRNA--protein transferase (212 aa).

It belongs to the L/F-transferase family.

It is found in the cytoplasm. It carries out the reaction N-terminal L-lysyl-[protein] + L-leucyl-tRNA(Leu) = N-terminal L-leucyl-L-lysyl-[protein] + tRNA(Leu) + H(+). The catalysed reaction is N-terminal L-arginyl-[protein] + L-leucyl-tRNA(Leu) = N-terminal L-leucyl-L-arginyl-[protein] + tRNA(Leu) + H(+). The enzyme catalyses L-phenylalanyl-tRNA(Phe) + an N-terminal L-alpha-aminoacyl-[protein] = an N-terminal L-phenylalanyl-L-alpha-aminoacyl-[protein] + tRNA(Phe). In terms of biological role, functions in the N-end rule pathway of protein degradation where it conjugates Leu, Phe and, less efficiently, Met from aminoacyl-tRNAs to the N-termini of proteins containing an N-terminal arginine or lysine. The protein is Leucyl/phenylalanyl-tRNA--protein transferase of Flavobacterium johnsoniae (strain ATCC 17061 / DSM 2064 / JCM 8514 / BCRC 14874 / CCUG 350202 / NBRC 14942 / NCIMB 11054 / UW101) (Cytophaga johnsonae).